The sequence spans 349 residues: MKISRETLHQLIENKLCQAGLKREHAATVAEVLVYADARGIHSHGAVRVEYYAERISKGGTNREPEFRLEETGPCSAILHADNAAGQVAAKMGMEHAIKTAQQNGVAVVGISRMGHSGAISYFVQQAARAGLIGISMCQSDPMVVPFGGAEIYYGTNPLAFAAPGEGDEILTFDMATTVQAWGKVLDARSRNMSIPDTWAVDKNGAPTTDPFAVHALLPAAGPKGYGLMMMIDVLSGVLLGLPFGRQVSSMYDDLHAGRNLGQLHVVINPNFFSSSELFRQHLSQTMRELNAITPAPGFNQVYYPGQDQDIKQRQAAVEGIEIVDDIYQYLISDALYNTSYETKNPFAQ.

H116 acts as the Proton acceptor in catalysis. Residues S140, 174–176 (DMA), K224, and 306–308 (GQD) each bind NAD(+).

This sequence belongs to the LDH2/MDH2 oxidoreductase family. In terms of assembly, homodimer.

The protein localises to the cytoplasm. It catalyses the reaction (S)-ureidoglycolate + NAD(+) = N-carbamoyl-2-oxoglycine + NADH + H(+). The protein operates within nitrogen metabolism; (S)-allantoin degradation; oxalurate from (S)-ureidoglycolate: step 1/1. Functionally, allD plays a pivotal role as a metabolic branch-point enzyme in nitrogen utilization via the assimilation of allantoin. It is able to utilize allantoin as a sole source of nitrogen under anaerobic conditions. Catalyzes the oxidation of ureidoglycolate to oxalurate. The protein is Ureidoglycolate dehydrogenase (NAD(+)) of Escherichia coli O157:H7.